A 217-amino-acid polypeptide reads, in one-letter code: MASISNEPERENRDEEETGANEDEDTGAQVAPIVRLEEVAVTTGEEDEDTILDLKSKLYRFDKDGSQWKERGAGTVKFLKHRVSGKIRLVMRQSKTLKICANHLVGSGMSVQEHAGNDKSCVWHARDFSDGELKDELFCIRFASVENCKAFMQKFKEVAESEEEKEESKDASDTAGLLEKLTVEEKESEKKPVEKAEENKKSEAVEEKKTEESVPSA.

2 disordered regions span residues 1–32 (MASI…QVAP) and 160–217 (ESEE…VPSA). Residue A2 is modified to N-acetylalanine. A compositionally biased stretch (acidic residues) spans 14–26 (DEEETGANEDEDT). The RanBD1 domain maps to 29-164 (QVAPIVRLEE…FKEVAESEEE (136 aa)). Residues 181–217 (LTVEEKESEKKPVEKAEENKKSEAVEEKKTEESVPSA) show a composition bias toward basic and acidic residues.

Interacts with the GTP-bound form of RAN1, RAN2 and RAN3.

The protein localises to the nucleus. Its subcellular location is the nuclear pore complex. The sequence is that of Ran-binding protein 1 homolog b (RANBP1B) from Arabidopsis thaliana (Mouse-ear cress).